We begin with the raw amino-acid sequence, 236 residues long: Conserved regulator of innate immunity protein 3 (236 aa).

The N-terminal 36 residues, 1–36, are a transit peptide targeting the mitochondrion; it reads MNTASLVRSLSRVALRSSQVVRMAAPRHFSQSAKVL.

The protein belongs to the MAM33 family.

It localises to the mitochondrion matrix. The chain is Conserved regulator of innate immunity protein 3 (cri-3) from Caenorhabditis elegans.